The primary structure comprises 320 residues: MAYQEDLHPLLGKAVEHINRVMVGKRDIAILSLAALLAKGHVLLEDVPGVGKTMMVRALAKSIGADFKRIQFTPDLLPSDVTGVSIYNAKTMEFEYRPGPIMGNIVLADEINRTSPKTQSALLEAMEEGSVTVDGHTMQLADPFFVMATQNPVEYEGTYPLPEAQLDRFLFKLRMGYPSFNEELDVLSLQEKSHPIETLEPVIAKEDFIFLQREVQNVRADDSIKEYIVEIVQKTRQHPSVQLGVSPRGSIALMKAAQAYALLHHRDYVIPDDIQYLAPFTLPHRMMLHPEAKFEGIQAEAIVREIMSAVKVPVQRSAVR.

46–53 (DVPGVGKT) contacts ATP.

The protein belongs to the MoxR family.

This is an uncharacterized protein from Bacillus subtilis (strain 168).